A 335-amino-acid polypeptide reads, in one-letter code: Proline racemase (335 aa).

Cysteine 91 serves as the catalytic Proton acceptor. The active-site Proton donor is the cysteine 256.

It belongs to the proline racemase family.

It carries out the reaction L-proline = D-proline. With respect to regulation, inhibited by pyrrole-2-carboxylate in vitro. Catalyzes the reversible interconversion of L- and D-proline. Likely functions as the proline racemase necessary for D-proline generation in order to discriminate it from the L-proline used for protein synthesis. In Acetoanaerobium sticklandii (strain ATCC 12662 / DSM 519 / JCM 1433 / CCUG 9281 / NCIMB 10654 / HF) (Clostridium sticklandii), this protein is Proline racemase.